The following is a 252-amino-acid chain: tRNA (guanine-N(1)-)-methyltransferase (252 aa).

S-adenosyl-L-methionine contacts are provided by residues Gly-113 and Ile-133 to Leu-138.

It belongs to the RNA methyltransferase TrmD family. As to quaternary structure, homodimer.

Its subcellular location is the cytoplasm. It catalyses the reaction guanosine(37) in tRNA + S-adenosyl-L-methionine = N(1)-methylguanosine(37) in tRNA + S-adenosyl-L-homocysteine + H(+). Specifically methylates guanosine-37 in various tRNAs. The polypeptide is tRNA (guanine-N(1)-)-methyltransferase (Nitrosococcus oceani (strain ATCC 19707 / BCRC 17464 / JCM 30415 / NCIMB 11848 / C-107)).